The chain runs to 115 residues: Holo-[acyl-carrier-protein] synthase (115 aa).

Asp-8 and Glu-50 together coordinate Mg(2+).

It belongs to the P-Pant transferase superfamily. AcpS family. It depends on Mg(2+) as a cofactor.

Its subcellular location is the cytoplasm. It carries out the reaction apo-[ACP] + CoA = holo-[ACP] + adenosine 3',5'-bisphosphate + H(+). In terms of biological role, transfers the 4'-phosphopantetheine moiety from coenzyme A to a Ser of acyl-carrier-protein. The protein is Holo-[acyl-carrier-protein] synthase of Renibacterium salmoninarum (strain ATCC 33209 / DSM 20767 / JCM 11484 / NBRC 15589 / NCIMB 2235).